Consider the following 484-residue polypeptide: Protein phosphatase 1B (484 aa).

The segment covering Met1–Asn14 has biased composition (basic and acidic residues). The interval Met1 to Asn20 is disordered. A lipid anchor (N-myristoyl glycine) is attached at Gly2. Lys12 is covalently cross-linked (Glycyl lysine isopeptide (Lys-Gly) (interchain with G-Cter in ISG15)). The PPM-type phosphatase domain maps to Arg23 to Phe295. Mn(2+) is bound by residues Asp60 and Gly61. Lys142 participates in a covalent cross-link: Glycyl lysine isopeptide (Lys-Gly) (interchain with G-Cter in ISG15). Mn(2+) contacts are provided by Asp243 and Asp286. At Ser391 the chain carries Phosphoserine. Residues Glu431–Leu484 are disordered. Polar residues predominate over residues Thr440–Glu456.

Belongs to the PP2C family. As to quaternary structure, monomer. Interacts with PAK6. Interacts with the phosphorylated form of IKBKB/IKKB. The cofactor is Mg(2+). Mn(2+) is required as a cofactor. Post-translationally, isgylation negatively regulates its activity. N-myristoylation is essential for the recognition of its substrates for dephosphorylation.

It localises to the cytoplasm. Its subcellular location is the cytosol. It is found in the membrane. It catalyses the reaction O-phospho-L-seryl-[protein] + H2O = L-seryl-[protein] + phosphate. The enzyme catalyses O-phospho-L-threonyl-[protein] + H2O = L-threonyl-[protein] + phosphate. Enzyme with a broad specificity. Dephosphorylates PRKAA1 and PRKAA2. Inhibits TBK1-mediated antiviral signaling by dephosphorylating it at 'Ser-172'. Plays an important role in the termination of TNF-alpha-mediated NF-kappa-B activation through dephosphorylating and inactivating IKBKB/IKKB. This chain is Protein phosphatase 1B (PPM1B), found in Bos taurus (Bovine).